Consider the following 234-residue polypeptide: BTB/POZ domain-containing protein KCTD5 (234 aa).

Position 2 is an N-acetylalanine (alanine 2). Residue serine 10 is modified to Phosphoserine. One can recognise a BTB domain in the interval 44-146 (KWVRLNVGGT…LVKDKIRERD (103 aa)). Residues 213–234 (PYGTASEPSEKAKILQERGSRM) are disordered. Basic and acidic residues predominate over residues 220-234 (PSEKAKILQERGSRM).

As to quaternary structure, homopentamer. Interacts (via C-terminus) with GRASP55/GORASP2. Interacts with CUL3 and with ubiquitinated proteins. Interacts with CRY1. (Microbial infection) Interacts with adeno-associated virus 2 (AAV-2) REP proteins.

The protein localises to the cytoplasm. It is found in the cytosol. Its subcellular location is the nucleus. Functionally, its interaction with CUL3 suggests that it may act as a substrate adapter in some E3 ligase complex. Does not affect the function of Kv channel Kv2.1/KCNB1, Kv1.2/KCNA2, Kv4.2/KCND2 and Kv3.4/KCNC4. This Homo sapiens (Human) protein is BTB/POZ domain-containing protein KCTD5 (KCTD5).